Here is a 422-residue protein sequence, read N- to C-terminus: Phosphoribosylamine--glycine ligase (422 aa).

The 208-residue stretch at 107–314 (KAFMQRHGIP…LFDVLDRAID (208 aa)) folds into the ATP-grasp domain. 133–194 (VDREGAPIVI…EEFLAGEEAS (62 aa)) provides a ligand contact to ATP. Residues glutamate 284 and asparagine 286 each coordinate Mg(2+).

The protein belongs to the GARS family. Requires Mg(2+) as cofactor. Mn(2+) is required as a cofactor.

The catalysed reaction is 5-phospho-beta-D-ribosylamine + glycine + ATP = N(1)-(5-phospho-beta-D-ribosyl)glycinamide + ADP + phosphate + H(+). The protein operates within purine metabolism; IMP biosynthesis via de novo pathway; N(1)-(5-phospho-D-ribosyl)glycinamide from 5-phospho-alpha-D-ribose 1-diphosphate: step 2/2. The protein is Phosphoribosylamine--glycine ligase of Ralstonia nicotianae (strain ATCC BAA-1114 / GMI1000) (Ralstonia solanacearum).